The primary structure comprises 209 residues: Putative BTB/POZ domain-containing protein At2g40450 (209 aa).

Residues 24 to 98 enclose the BTB domain; that stretch reads ADVRLKAGDS…IYRVDGSICS (75 aa).

Its pathway is protein modification; protein ubiquitination. Its function is as follows. May act as a substrate-specific adapter of an E3 ubiquitin-protein ligase complex (CUL3-RBX1-BTB) which mediates the ubiquitination and subsequent proteasomal degradation of target proteins. The polypeptide is Putative BTB/POZ domain-containing protein At2g40450 (Arabidopsis thaliana (Mouse-ear cress)).